The primary structure comprises 334 residues: Protein OPG181 (334 aa).

It belongs to the orthopoxvirus OPG181 family.

The sequence is that of Protein OPG181 (OPG181) from Bos taurus (Bovine).